We begin with the raw amino-acid sequence, 230 residues long: Thymidylate kinase (230 aa).

Residue 20-27 (GGEGAGKS) participates in ATP binding.

This sequence belongs to the thymidylate kinase family.

It carries out the reaction dTMP + ATP = dTDP + ADP. In terms of biological role, phosphorylation of dTMP to form dTDP in both de novo and salvage pathways of dTTP synthesis. In Rhodopseudomonas palustris (strain ATCC BAA-98 / CGA009), this protein is Thymidylate kinase.